Reading from the N-terminus, the 282-residue chain is Probable ribosomal RNA small subunit methyltransferase A (282 aa).

Residues H24, L26, G51, E72, D100, and N115 each contribute to the S-adenosyl-L-methionine site.

The protein belongs to the class I-like SAM-binding methyltransferase superfamily. rRNA adenine N(6)-methyltransferase family. RsmA subfamily.

Its subcellular location is the cytoplasm. Functionally, specifically dimethylates two adjacent adenosines in the loop of a conserved hairpin near the 3'-end of 16S rRNA in the 30S particle. May play a critical role in biogenesis of 30S subunits. The protein is Probable ribosomal RNA small subunit methyltransferase A of Halobacterium salinarum (strain ATCC 29341 / DSM 671 / R1).